A 367-amino-acid polypeptide reads, in one-letter code: Alanine racemase (367 aa).

Residue Lys-34 is the Proton acceptor; specific for D-alanine of the active site. Lys-34 bears the N6-(pyridoxal phosphate)lysine mark. Position 131 (Arg-131) interacts with substrate. Tyr-258 serves as the catalytic Proton acceptor; specific for L-alanine. Substrate is bound at residue Met-306.

This sequence belongs to the alanine racemase family. The cofactor is pyridoxal 5'-phosphate.

It carries out the reaction L-alanine = D-alanine. It participates in amino-acid biosynthesis; D-alanine biosynthesis; D-alanine from L-alanine: step 1/1. In terms of biological role, catalyzes the interconversion of L-alanine and D-alanine. May also act on other amino acids. This is Alanine racemase (alr) from Corynebacterium efficiens (strain DSM 44549 / YS-314 / AJ 12310 / JCM 11189 / NBRC 100395).